The primary structure comprises 143 residues: Acetyltransferase plu1384 (143 aa).

The region spanning 1–138 (MEIRVFRQDD…ESVIFSKRLI (138 aa)) is the N-acetyltransferase domain.

It belongs to the acetyltransferase family. YpeA subfamily.

In Photorhabdus laumondii subsp. laumondii (strain DSM 15139 / CIP 105565 / TT01) (Photorhabdus luminescens subsp. laumondii), this protein is Acetyltransferase plu1384.